The sequence spans 468 residues: Methylenetetrahydrofolate--tRNA-(uracil-5-)-methyltransferase TrmFO (468 aa).

Residue 10 to 15 (GGGLAG) participates in FAD binding.

It belongs to the MnmG family. TrmFO subfamily. It depends on FAD as a cofactor.

The protein localises to the cytoplasm. It catalyses the reaction uridine(54) in tRNA + (6R)-5,10-methylene-5,6,7,8-tetrahydrofolate + NADH + H(+) = 5-methyluridine(54) in tRNA + (6S)-5,6,7,8-tetrahydrofolate + NAD(+). The catalysed reaction is uridine(54) in tRNA + (6R)-5,10-methylene-5,6,7,8-tetrahydrofolate + NADPH + H(+) = 5-methyluridine(54) in tRNA + (6S)-5,6,7,8-tetrahydrofolate + NADP(+). Functionally, catalyzes the folate-dependent formation of 5-methyl-uridine at position 54 (M-5-U54) in all tRNAs. In Chelativorans sp. (strain BNC1), this protein is Methylenetetrahydrofolate--tRNA-(uracil-5-)-methyltransferase TrmFO.